The primary structure comprises 125 residues: Oxytocin-neurophysin 1 (125 aa).

The N-terminal stretch at 1-19 (MACPSLACCLLGLLALTSA) is a signal peptide. C20 and C25 are disulfide-bonded. G28 is subject to Glycine amide. Cystine bridges form between C41–C85, C44–C58, C52–C75, C59–C65, C92–C104, C98–C116, and C105–C110.

This sequence belongs to the vasopressin/oxytocin family. Interacts with oxytocin receptor (Ki=1.5 nM). Interacts with vasopressin V1aR/AVPR1A (Ki=37 nM), V1bR/AVPR1B (Ki=222 nM), and V2R/AVPR2 receptors (Ki=823 nM).

Neurophysin 1 specifically binds oxytocin. Functionally, oxytocin causes contraction of the smooth muscle of the uterus and of the mammary gland. Acts by binding to oxytocin receptor (OXTR). This is Oxytocin-neurophysin 1 (Oxt) from Rattus norvegicus (Rat).